We begin with the raw amino-acid sequence, 723 residues long: Catalase-peroxidase (723 aa).

Residues 98–226 constitute a cross-link (tryptophyl-tyrosyl-methioninium (Trp-Tyr) (with M-252)); it reads WHAAGSYRAA…LAAVQMGLIY (129 aa). Residue H99 is the Proton acceptor of the active site. Residues 226 to 252 constitute a cross-link (tryptophyl-tyrosyl-methioninium (Tyr-Met) (with W-98)); sequence YVNPEGVNGKPDPLKTAAQVRETFARM. A heme b-binding site is contributed by H267. The tract at residues 267 to 286 is disordered; it reads HTVGKTHGNGRAENLGPSPE.

Belongs to the peroxidase family. Peroxidase/catalase subfamily. Homodimer or homotetramer. Heme b is required as a cofactor. In terms of processing, formation of the three residue Trp-Tyr-Met cross-link is important for the catalase, but not the peroxidase activity of the enzyme.

The catalysed reaction is H2O2 + AH2 = A + 2 H2O. It carries out the reaction 2 H2O2 = O2 + 2 H2O. In terms of biological role, bifunctional enzyme with both catalase and broad-spectrum peroxidase activity. This chain is Catalase-peroxidase, found in Thioalkalivibrio sulfidiphilus (strain HL-EbGR7).